A 553-amino-acid chain; its full sequence is Dihydroxy-acid dehydratase (553 aa).

Aspartate 78 lines the Mg(2+) pocket. Residue cysteine 119 coordinates [2Fe-2S] cluster. Mg(2+) contacts are provided by aspartate 120 and lysine 121. Lysine 121 bears the N6-carboxylysine mark. A [2Fe-2S] cluster-binding site is contributed by cysteine 193. Glutamate 441 contributes to the Mg(2+) binding site. Residue serine 467 is the Proton acceptor of the active site.

The protein belongs to the IlvD/Edd family. In terms of assembly, homodimer. [2Fe-2S] cluster serves as cofactor. The cofactor is Mg(2+).

It catalyses the reaction (2R)-2,3-dihydroxy-3-methylbutanoate = 3-methyl-2-oxobutanoate + H2O. The enzyme catalyses (2R,3R)-2,3-dihydroxy-3-methylpentanoate = (S)-3-methyl-2-oxopentanoate + H2O. The protein operates within amino-acid biosynthesis; L-isoleucine biosynthesis; L-isoleucine from 2-oxobutanoate: step 3/4. It functions in the pathway amino-acid biosynthesis; L-valine biosynthesis; L-valine from pyruvate: step 3/4. Functions in the biosynthesis of branched-chain amino acids. Catalyzes the dehydration of (2R,3R)-2,3-dihydroxy-3-methylpentanoate (2,3-dihydroxy-3-methylvalerate) into 2-oxo-3-methylpentanoate (2-oxo-3-methylvalerate) and of (2R)-2,3-dihydroxy-3-methylbutanoate (2,3-dihydroxyisovalerate) into 2-oxo-3-methylbutanoate (2-oxoisovalerate), the penultimate precursor to L-isoleucine and L-valine, respectively. The sequence is that of Dihydroxy-acid dehydratase from Geotalea daltonii (strain DSM 22248 / JCM 15807 / FRC-32) (Geobacter daltonii).